A 958-amino-acid polypeptide reads, in one-letter code: Protein translocase subunit SecA (958 aa).

ATP-binding positions include Gln-86, Gly-104–Thr-108, and Asp-494. Disordered regions lie at residues Ala-863–Thr-883 and Gln-902–Lys-937. Zn(2+) contacts are provided by Cys-941, Cys-943, Cys-952, and His-953.

This sequence belongs to the SecA family. Monomer and homodimer. Part of the essential Sec protein translocation apparatus which comprises SecA, SecYEG and auxiliary proteins SecDF. Other proteins may also be involved. Zn(2+) is required as a cofactor.

The protein localises to the cell membrane. Its subcellular location is the cytoplasm. The catalysed reaction is ATP + H2O + cellular proteinSide 1 = ADP + phosphate + cellular proteinSide 2.. In terms of biological role, part of the Sec protein translocase complex. Interacts with the SecYEG preprotein conducting channel. Has a central role in coupling the hydrolysis of ATP to the transfer of proteins into and across the cell membrane, serving as an ATP-driven molecular motor driving the stepwise translocation of polypeptide chains across the membrane. In Bifidobacterium adolescentis (strain ATCC 15703 / DSM 20083 / NCTC 11814 / E194a), this protein is Protein translocase subunit SecA.